The primary structure comprises 307 residues: Putative protein p53 (307 aa).

A compositionally biased stretch (basic and acidic residues) spans 44–53; that stretch reads DPHEPTEANK. 2 disordered regions span residues 44 to 64 and 109 to 129; these read DPHE…VKPQ and ETKP…APEP.

In Escherichia coli (Bacteriophage APSE-1), this protein is Putative protein p53 (53).